The sequence spans 100 residues: Class II hydrophobin 4 (100 aa).

The N-terminal stretch at 1 to 17 (MQFYAIASLFLAGTAFA) is a signal peptide. Disulfide bonds link Cys29/Cys79, Cys40/Cys70, Cys41/Cys53, and Cys80/Cys92.

Belongs to the cerato-ulmin hydrophobin family.

It is found in the secreted. It localises to the cell wall. Functionally, aerial growth, conidiation, and dispersal of filamentous fungi in the environment rely upon a capability of their secreting small amphipathic proteins called hydrophobins (HPBs) with low sequence identity. Class I can self-assemble into an outermost layer of rodlet bundles on aerial cell surfaces, conferring cellular hydrophobicity that supports fungal growth, development and dispersal; whereas Class II form highly ordered films at water-air interfaces through intermolecular interactions but contribute nothing to the rodlet structure. Does not seem to be important for the ability to cause seedling disease. The polypeptide is Class II hydrophobin 4 (Gibberella moniliformis (Maize ear and stalk rot fungus)).